The primary structure comprises 200 residues: 3-isopropylmalate dehydratase small subunit (200 aa).

Belongs to the LeuD family. LeuD type 1 subfamily. As to quaternary structure, heterodimer of LeuC and LeuD.

It catalyses the reaction (2R,3S)-3-isopropylmalate = (2S)-2-isopropylmalate. The protein operates within amino-acid biosynthesis; L-leucine biosynthesis; L-leucine from 3-methyl-2-oxobutanoate: step 2/4. In terms of biological role, catalyzes the isomerization between 2-isopropylmalate and 3-isopropylmalate, via the formation of 2-isopropylmaleate. The polypeptide is 3-isopropylmalate dehydratase small subunit (Proteus mirabilis (strain HI4320)).